The primary structure comprises 191 residues: Ribonuclease M5 (191 aa).

A Toprim domain is found at 8–91 (HEFIVVEGRD…AFINRQDALP (84 aa)). Glutamate 14, aspartate 60, and aspartate 62 together coordinate Mg(2+).

Belongs to the ribonuclease M5 family. Mg(2+) serves as cofactor.

Its subcellular location is the cytoplasm. The catalysed reaction is Endonucleolytic cleavage of RNA, removing 21 and 42 nucleotides, respectively, from the 5'- and 3'-termini of a 5S-rRNA precursor.. Required for correct processing of both the 5' and 3' ends of 5S rRNA precursor. Cleaves both sides of a double-stranded region yielding mature 5S rRNA in one step. The protein is Ribonuclease M5 of Listeria monocytogenes serovar 1/2a (strain ATCC BAA-679 / EGD-e).